Here is a 267-residue protein sequence, read N- to C-terminus: 4,5-DOPA dioxygenase extradiol (267 aa).

Residues H9, H47, H168, and H222 each coordinate Zn(2+).

This sequence belongs to the DODA-type extradiol aromatic ring-opening dioxygenase family. Zn(2+) is required as a cofactor. The cofactor is Fe(2+). In terms of tissue distribution, expressed in petals. Not detected in leaves, stems and roots.

It is found in the cytoplasm. The catalysed reaction is L-dopa + O2 = 4-(L-alanin-3-yl)-2-hydroxy-cis,cis-muconate 6-semialdehyde + H(+). It functions in the pathway pigment biosynthesis; betalain biosynthesis. Functionally, opens the cyclic ring of dihydroxy-phenylalanine (DOPA) between carbons 4 and 5, thus producing an unstable seco-DOPA that rearranges nonenzymatically to betalamic acid. Produces mainly (S)-betalamic acid. Required for the coloration of flowers. This chain is 4,5-DOPA dioxygenase extradiol (DOD), found in Mirabilis jalapa (Garden four-o'clock).